We begin with the raw amino-acid sequence, 212 residues long: Large ribosomal subunit protein uL3 (212 aa).

The protein belongs to the universal ribosomal protein uL3 family. As to quaternary structure, part of the 50S ribosomal subunit. Forms a cluster with proteins L14 and L19.

Its function is as follows. One of the primary rRNA binding proteins, it binds directly near the 3'-end of the 23S rRNA, where it nucleates assembly of the 50S subunit. The polypeptide is Large ribosomal subunit protein uL3 (Acetivibrio thermocellus (strain ATCC 27405 / DSM 1237 / JCM 9322 / NBRC 103400 / NCIMB 10682 / NRRL B-4536 / VPI 7372) (Clostridium thermocellum)).